The chain runs to 460 residues: Hydroxymethylglutaryl-CoA synthase erg13B (460 aa).

Glu86 acts as the Proton donor/acceptor in catalysis. Cys120 acts as the Acyl-thioester intermediate in catalysis. (3S)-3-hydroxy-3-methylglutaryl-CoA is bound by residues Cys120, Thr162, Ser212, His263, Lys272, Asn340, and Ser374. Catalysis depends on His263, which acts as the Proton donor/acceptor.

It belongs to the thiolase-like superfamily. HMG-CoA synthase family.

It carries out the reaction acetoacetyl-CoA + acetyl-CoA + H2O = (3S)-3-hydroxy-3-methylglutaryl-CoA + CoA + H(+). It functions in the pathway metabolic intermediate biosynthesis; (R)-mevalonate biosynthesis; (R)-mevalonate from acetyl-CoA: step 2/3. Functionally, hydroxymethylglutaryl-CoA synthase; part of the first module of ergosterol biosynthesis pathway that includes the early steps of the pathway, conserved across all eukaryotes, and which results in the formation of mevalonate from acetyl-coenzyme A (acetyl-CoA). Erg13A and erg13B condense acetyl-CoA with acetoacetyl-CoA to form hydroxymethylglutaryl-CoA (HMG-CoA). The first module starts with the action of the cytosolic acetyl-CoA acetyltransferase erg10B that catalyzes the formation of acetoacetyl-CoA. The hydroxymethylglutaryl-CoA synthases erg13A and erg13B then condense acetyl-CoA with acetoacetyl-CoA to form HMG-CoA. The rate-limiting step of the early module is the reduction to mevalonate by the 3-hydroxy-3-methylglutaryl-coenzyme A (HMG-CoA) reductases hmg1 and hmg2. Mevalonate is also a precursor for the extracellular siderophore triacetylfusarinine C (TAFC). This chain is Hydroxymethylglutaryl-CoA synthase erg13B, found in Aspergillus fumigatus (strain ATCC MYA-4609 / CBS 101355 / FGSC A1100 / Af293) (Neosartorya fumigata).